The primary structure comprises 224 residues: Transcriptional regulatory protein DltR (224 aa).

A Response regulatory domain is found at 2-116 (RLLVVEDEKS…ELLARIRLRT (115 aa)). A 4-aspartylphosphate modification is found at Asp51. A DNA-binding region (ompR/PhoB-type) is located at residues 124 to 222 (ANQLRLGNIR…TKGFGYSLEE (99 aa)).

Phosphorylated by DltS.

The protein localises to the cytoplasm. Functionally, member of the two-component regulatory system DltS/DltR. Regulates the expression of the dlt operon. This is Transcriptional regulatory protein DltR (dltR) from Streptococcus agalactiae serotype III (strain NEM316).